Reading from the N-terminus, the 153-residue chain is Satratoxin biosynthesis SC2 cluster transcription factor SAT15 (153 aa).

The protein resides in the nucleus. Transcriptional regulator that may regulate the expression of the satratoxin biosynthesis SC2 cluster, one of the 3 clusters involved in the biosynthesis of satratoxins, trichothecene mycotoxins that are associated with human food poisonings. This is Satratoxin biosynthesis SC2 cluster transcription factor SAT15 from Stachybotrys chartarum (strain CBS 109288 / IBT 7711) (Toxic black mold).